Here is a 258-residue protein sequence, read N- to C-terminus: MSIDAKLVKELREKTGAGMMDCKKALEDSGGDMEKAITWLRQKGLAGAAKKASRVAAEGAVDSYIHFGNRIGVLVEVNCETDFVARNEDFKKLVQDIAKQIAACQNVEYVSVDQIPAEVVEREKAIEMGKEDLANKPENIREKIVQGRIEKRLKELSLLDQPFIKDSSITVEELVKQHIAKLGENIRVRRFVRFVLGEGIEKEEVDFAAEVAAQAGLKPAEAPKVEETPPAPPEEPAPEPAPAAESKPAKKGSAKKKK.

Positions 81–84 (TDFV) are involved in Mg(2+) ion dislocation from EF-Tu. A disordered region spans residues 216 to 258 (GLKPAEAPKVEETPPAPPEEPAPEPAPAAESKPAKKGSAKKKK). Pro residues predominate over residues 229–241 (PPAPPEEPAPEPA). Residues 249 to 258 (AKKGSAKKKK) show a composition bias toward basic residues.

The protein belongs to the EF-Ts family.

The protein localises to the cytoplasm. Associates with the EF-Tu.GDP complex and induces the exchange of GDP to GTP. It remains bound to the aminoacyl-tRNA.EF-Tu.GTP complex up to the GTP hydrolysis stage on the ribosome. This chain is Elongation factor Ts, found in Synechococcus sp. (strain JA-2-3B'a(2-13)) (Cyanobacteria bacterium Yellowstone B-Prime).